The chain runs to 138 residues: Mitochondrial import inner membrane translocase subunit tim-16 (138 aa).

Residues 32 to 43 (TQQAAARHAAAT) are compositionally biased toward low complexity. Disordered stretches follow at residues 32 to 58 (TQQAAARHAAATGQSPSETKENANANA) and 118 to 138 (LSRLEQKSEENKEQQKENSKE). Residues 44-56 (GQSPSETKENANA) are compositionally biased toward polar residues. The interval 66–119 (ESLQILNVKTPLNREDVEKHYEHLFAINDKAKGGTFYLQSKVYRAKERIDEELS) is J-like.

Belongs to the TIM16/PAM16 family. Probable component of the PAM complex at least composed of a mitochondrial HSP70 protein, GrpE, tim-44, tim-16 and tim-14. Associates with the TIM23 complex.

It localises to the mitochondrion inner membrane. Its function is as follows. Regulates ATP-dependent protein translocation into the mitochondrial matrix. This chain is Mitochondrial import inner membrane translocase subunit tim-16, found in Caenorhabditis briggsae.